The primary structure comprises 89 residues: Co-chaperonin GroES (89 aa).

Belongs to the GroES chaperonin family. As to quaternary structure, heptamer of 7 subunits arranged in a ring. Interacts with the chaperonin GroEL.

Its subcellular location is the cytoplasm. In terms of biological role, together with the chaperonin GroEL, plays an essential role in assisting protein folding. The GroEL-GroES system forms a nano-cage that allows encapsulation of the non-native substrate proteins and provides a physical environment optimized to promote and accelerate protein folding. GroES binds to the apical surface of the GroEL ring, thereby capping the opening of the GroEL channel. This is Co-chaperonin GroES from Petrotoga mobilis (strain DSM 10674 / SJ95).